We begin with the raw amino-acid sequence, 174 residues long: Scytalone dehydratase-like protein Arp1 (174 aa).

Tyrosine 49 serves as a coordination point for substrate. Catalysis depends on residues histidine 84 and histidine 109. Asparagine 130 is a binding site for substrate.

The protein belongs to the scytalone dehydratase family. Homotrimer. Each subunit contains an active site, located in the central part of the hydrophobic core of the monomer, which functions independently.

Functionally, scytalone dehydratase-like protein; part of the Pks2 gene cluster that mediates the formation of infectious structures (appressoria), enabling these fungi to kill insects faster. The product of the Pks2 gene cluster is different from the one of Pks1 and has still not been identified. This is Scytalone dehydratase-like protein Arp1 from Metarhizium majus (strain ARSEF 297).